The following is a 137-amino-acid chain: Large ribosomal subunit protein uL16 (137 aa).

The protein belongs to the universal ribosomal protein uL16 family. As to quaternary structure, part of the 50S ribosomal subunit.

Functionally, binds 23S rRNA and is also seen to make contacts with the A and possibly P site tRNAs. This chain is Large ribosomal subunit protein uL16, found in Mycoplasma capricolum subsp. capricolum (strain California kid / ATCC 27343 / NCTC 10154).